A 336-amino-acid polypeptide reads, in one-letter code: Glyceraldehyde-3-phosphate dehydrogenase (336 aa).

Residues 12 to 13 (RI), Asp-34, and Arg-79 each bind NAD(+). Residues 150-152 (SCT), Thr-181, 210-211 (TG), and Arg-233 contribute to the D-glyceraldehyde 3-phosphate site. Catalysis depends on Cys-151, which acts as the Nucleophile. Residue Asn-315 coordinates NAD(+).

Belongs to the glyceraldehyde-3-phosphate dehydrogenase family. In terms of assembly, homotetramer.

The protein resides in the cytoplasm. It carries out the reaction D-glyceraldehyde 3-phosphate + phosphate + NAD(+) = (2R)-3-phospho-glyceroyl phosphate + NADH + H(+). It participates in carbohydrate degradation; glycolysis; pyruvate from D-glyceraldehyde 3-phosphate: step 1/5. Involved in osmoadaptation. This chain is Glyceraldehyde-3-phosphate dehydrogenase (gpdA), found in Emericella nidulans (strain FGSC A4 / ATCC 38163 / CBS 112.46 / NRRL 194 / M139) (Aspergillus nidulans).